Reading from the N-terminus, the 188-residue chain is ATP synthase subunit b (188 aa).

The helical transmembrane segment at 21–41 (ILPHLGELIVGIIFAIIIYAV) threads the bilayer.

This sequence belongs to the ATPase B chain family. As to quaternary structure, F-type ATPases have 2 components, F(1) - the catalytic core - and F(0) - the membrane proton channel. F(1) has five subunits: alpha(3), beta(3), gamma(1), delta(1), epsilon(1). F(0) has three main subunits: a(1), b(2) and c(10-14). The alpha and beta chains form an alternating ring which encloses part of the gamma chain. F(1) is attached to F(0) by a central stalk formed by the gamma and epsilon chains, while a peripheral stalk is formed by the delta and b chains.

It is found in the cell membrane. Its function is as follows. F(1)F(0) ATP synthase produces ATP from ADP in the presence of a proton or sodium gradient. F-type ATPases consist of two structural domains, F(1) containing the extramembraneous catalytic core and F(0) containing the membrane proton channel, linked together by a central stalk and a peripheral stalk. During catalysis, ATP synthesis in the catalytic domain of F(1) is coupled via a rotary mechanism of the central stalk subunits to proton translocation. In terms of biological role, component of the F(0) channel, it forms part of the peripheral stalk, linking F(1) to F(0). The chain is ATP synthase subunit b from Kineococcus radiotolerans (strain ATCC BAA-149 / DSM 14245 / SRS30216).